Here is a 372-residue protein sequence, read N- to C-terminus: uncharacterized protein (372 aa).

Residues lysine 328 to glutamine 353 are disordered.

In terms of biological role, induces the SOS system when expressed in E.coli, therefore, it may play a role in DNA metabolism and/or in genome stability. This is an uncharacterized protein from Saccharomyces cerevisiae (strain ATCC 204508 / S288c) (Baker's yeast).